We begin with the raw amino-acid sequence, 203 residues long: Large ribosomal subunit protein uL18 (203 aa).

It belongs to the universal ribosomal protein uL18 family. As to quaternary structure, part of the 50S ribosomal subunit. Contacts the 5S and 23S rRNAs.

In terms of biological role, this is one of the proteins that bind and probably mediate the attachment of the 5S RNA into the large ribosomal subunit, where it forms part of the central protuberance. The polypeptide is Large ribosomal subunit protein uL18 (Pyrococcus furiosus (strain ATCC 43587 / DSM 3638 / JCM 8422 / Vc1)).